The chain runs to 323 residues: Aspartate carbamoyltransferase catalytic subunit (323 aa).

The carbamoyl phosphate site is built by Arg65 and Thr66. Lys93 serves as a coordination point for L-aspartate. The carbamoyl phosphate site is built by Arg115, His149, and Gln152. L-aspartate contacts are provided by Arg182 and Arg237. 2 residues coordinate carbamoyl phosphate: Gly278 and Pro279.

This sequence belongs to the aspartate/ornithine carbamoyltransferase superfamily. ATCase family. Heterododecamer (2C3:3R2) of six catalytic PyrB chains organized as two trimers (C3), and six regulatory PyrI chains organized as three dimers (R2).

The enzyme catalyses carbamoyl phosphate + L-aspartate = N-carbamoyl-L-aspartate + phosphate + H(+). The protein operates within pyrimidine metabolism; UMP biosynthesis via de novo pathway; (S)-dihydroorotate from bicarbonate: step 2/3. Functionally, catalyzes the condensation of carbamoyl phosphate and aspartate to form carbamoyl aspartate and inorganic phosphate, the committed step in the de novo pyrimidine nucleotide biosynthesis pathway. This is Aspartate carbamoyltransferase catalytic subunit from Aromatoleum aromaticum (strain DSM 19018 / LMG 30748 / EbN1) (Azoarcus sp. (strain EbN1)).